The chain runs to 301 residues: Pseudouridine-5'-phosphate glycosidase (301 aa).

E23 (proton donor) is an active-site residue. Positions 84 and 104 each coordinate substrate. Residue D136 coordinates Mn(2+). 138 to 140 serves as a coordination point for substrate; the sequence is SRD. The active-site Nucleophile is K157.

Belongs to the pseudouridine-5'-phosphate glycosidase family. In terms of assembly, homotrimer. Requires Mn(2+) as cofactor.

It carries out the reaction D-ribose 5-phosphate + uracil = psi-UMP + H2O. Its function is as follows. Catalyzes the reversible cleavage of pseudouridine 5'-phosphate (PsiMP) to ribose 5-phosphate and uracil. Functions biologically in the cleavage direction, as part of a pseudouridine degradation pathway. The protein is Pseudouridine-5'-phosphate glycosidase of Mycoplasmopsis agalactiae (strain NCTC 10123 / CIP 59.7 / PG2) (Mycoplasma agalactiae).